We begin with the raw amino-acid sequence, 68 residues long: uncharacterized protein (68 aa).

The helical transmembrane segment at 24 to 44 (AHICKCIAMFFVVAGVVLMFF) threads the bilayer.

It is found in the endoplasmic reticulum. It localises to the membrane. This is an uncharacterized protein from Saccharomyces cerevisiae (strain ATCC 204508 / S288c) (Baker's yeast).